Reading from the N-terminus, the 346-residue chain is Melanoma-associated antigen B4 (346 aa).

Residues 1-18 (MPRGQKSKLRAREKRQRT) are compositionally biased toward basic residues. Residues 1–107 (MPRGQKSKLR…STSTERSLKD (107 aa)) are disordered. The span at 45 to 54 (VLRDTASSSL) shows a compositional bias: polar residues. The segment covering 92–101 (ASSSQASTST) has biased composition (low complexity). One can recognise an MAGE domain in the interval 109 to 307 (LTRKTKMLVQ…NNFPLLYEEA (199 aa)). The segment at 311–346 (EEERAGARPRVAARRGTTAMTSAYSRATSSSSSQPM) is disordered. Residues 318–346 (RPRVAARRGTTAMTSAYSRATSSSSSQPM) are compositionally biased toward low complexity.

As to expression, expressed in testis.

The protein localises to the cytoplasm. The polypeptide is Melanoma-associated antigen B4 (MAGEB4) (Homo sapiens (Human)).